A 593-amino-acid chain; its full sequence is UvrABC system protein C (593 aa).

The GIY-YIG domain occupies 17-94 (MEPGCYLMKD…IKQYQPRYNI (78 aa)). In terms of domain architecture, UVR spans 199–234 (KTILKSLEERMLTASESLDFERAKEYRDLIQHIQNL).

It belongs to the UvrC family. As to quaternary structure, interacts with UvrB in an incision complex.

The protein resides in the cytoplasm. Its function is as follows. The UvrABC repair system catalyzes the recognition and processing of DNA lesions. UvrC both incises the 5' and 3' sides of the lesion. The N-terminal half is responsible for the 3' incision and the C-terminal half is responsible for the 5' incision. This chain is UvrABC system protein C, found in Staphylococcus aureus (strain MSSA476).